Consider the following 92-residue polypeptide: Large ribosomal subunit protein bL25 (92 aa).

The protein belongs to the bacterial ribosomal protein bL25 family. In terms of assembly, part of the 50S ribosomal subunit; part of the 5S rRNA/L5/L18/L25 subcomplex. Contacts the 5S rRNA. Binds to the 5S rRNA independently of L5 and L18.

This is one of the proteins that binds to the 5S RNA in the ribosome where it forms part of the central protuberance. This chain is Large ribosomal subunit protein bL25, found in Vibrio atlanticus (strain LGP32) (Vibrio splendidus (strain Mel32)).